A 683-amino-acid chain; its full sequence is Phosphomethylpyrimidine synthase (683 aa).

Substrate is bound by residues asparagine 235, methionine 264, tyrosine 293, histidine 329, 349-351 (SRG), 390-393 (DGMR), and glutamate 429. A Zn(2+)-binding site is contributed by histidine 433. Tyrosine 456 provides a ligand contact to substrate. A Zn(2+)-binding site is contributed by histidine 497. Cysteine 577, cysteine 580, and cysteine 585 together coordinate [4Fe-4S] cluster. Positions 647–683 (RQSPGVESTSLESTSLESTVLESTSLESTALEKAKEV) are disordered. Over residues 653–675 (ESTSLESTSLESTVLESTSLEST) the composition is skewed to low complexity.

It belongs to the ThiC family. As to quaternary structure, homodimer. [4Fe-4S] cluster is required as a cofactor.

It carries out the reaction 5-amino-1-(5-phospho-beta-D-ribosyl)imidazole + S-adenosyl-L-methionine = 4-amino-2-methyl-5-(phosphooxymethyl)pyrimidine + CO + 5'-deoxyadenosine + formate + L-methionine + 3 H(+). It participates in cofactor biosynthesis; thiamine diphosphate biosynthesis. Catalyzes the synthesis of the hydroxymethylpyrimidine phosphate (HMP-P) moiety of thiamine from aminoimidazole ribotide (AIR) in a radical S-adenosyl-L-methionine (SAM)-dependent reaction. The protein is Phosphomethylpyrimidine synthase of Shewanella loihica (strain ATCC BAA-1088 / PV-4).